We begin with the raw amino-acid sequence, 435 residues long: Methylenetetrahydrofolate--tRNA-(uracil-5-)-methyltransferase TrmFO (435 aa).

Residue 7-12 (GAGLAG) coordinates FAD.

It belongs to the MnmG family. TrmFO subfamily. FAD serves as cofactor.

The protein localises to the cytoplasm. The enzyme catalyses uridine(54) in tRNA + (6R)-5,10-methylene-5,6,7,8-tetrahydrofolate + NADH + H(+) = 5-methyluridine(54) in tRNA + (6S)-5,6,7,8-tetrahydrofolate + NAD(+). It catalyses the reaction uridine(54) in tRNA + (6R)-5,10-methylene-5,6,7,8-tetrahydrofolate + NADPH + H(+) = 5-methyluridine(54) in tRNA + (6S)-5,6,7,8-tetrahydrofolate + NADP(+). Catalyzes the folate-dependent formation of 5-methyl-uridine at position 54 (M-5-U54) in all tRNAs. The chain is Methylenetetrahydrofolate--tRNA-(uracil-5-)-methyltransferase TrmFO from Thermotoga sp. (strain RQ2).